Consider the following 340-residue polypeptide: Glutamyl-tRNA reductase (340 aa).

Residues 49–52, Ser-108, 113–115, and Gln-119 contribute to the substrate site; these read TCNR and ETE. Residue Cys-50 is the Nucleophile of the active site. 188–193 contacts NADP(+); the sequence is GAGEMS.

The protein belongs to the glutamyl-tRNA reductase family. Homodimer.

It carries out the reaction (S)-4-amino-5-oxopentanoate + tRNA(Glu) + NADP(+) = L-glutamyl-tRNA(Glu) + NADPH + H(+). It participates in porphyrin-containing compound metabolism; protoporphyrin-IX biosynthesis; 5-aminolevulinate from L-glutamyl-tRNA(Glu): step 1/2. Functionally, catalyzes the NADPH-dependent reduction of glutamyl-tRNA(Glu) to glutamate 1-semialdehyde (GSA). The sequence is that of Glutamyl-tRNA reductase from Akkermansia muciniphila (strain ATCC BAA-835 / DSM 22959 / JCM 33894 / BCRC 81048 / CCUG 64013 / CIP 107961 / Muc).